The following is a 696-amino-acid chain: UvrABC system protein C (696 aa).

In terms of domain architecture, GIY-YIG spans 16-95 (TEPGVYKFRD…IKRFDPRFNV (80 aa)). The region spanning 208 to 243 (DKVTRKLNADMMAAAEELDFERAARLRDDLEAIDKV) is the UVR domain.

It belongs to the UvrC family. As to quaternary structure, interacts with UvrB in an incision complex.

The protein resides in the cytoplasm. In terms of biological role, the UvrABC repair system catalyzes the recognition and processing of DNA lesions. UvrC both incises the 5' and 3' sides of the lesion. The N-terminal half is responsible for the 3' incision and the C-terminal half is responsible for the 5' incision. The protein is UvrABC system protein C of Corynebacterium glutamicum (strain ATCC 13032 / DSM 20300 / JCM 1318 / BCRC 11384 / CCUG 27702 / LMG 3730 / NBRC 12168 / NCIMB 10025 / NRRL B-2784 / 534).